The chain runs to 793 residues: Probable alpha-fucosidase A (793 aa).

The first 20 residues, 1–20, serve as a signal peptide directing secretion; the sequence is MLISGSSAALCALALPFAAA. N-linked (GlcNAc...) asparagine glycosylation is found at asparagine 30, asparagine 83, asparagine 100, asparagine 104, asparagine 123, asparagine 179, asparagine 199, asparagine 234, asparagine 323, asparagine 597, asparagine 622, asparagine 660, and asparagine 757.

The protein belongs to the glycosyl hydrolase 95 family.

It is found in the secreted. The catalysed reaction is an alpha-L-fucoside + H2O = L-fucose + an alcohol. Its function is as follows. Alpha-fucosidase involved in degradation of fucosylated xyloglucans. Hydrolyzes alpha-1,2-linked fucose. The polypeptide is Probable alpha-fucosidase A (afcA) (Aspergillus niger (strain ATCC MYA-4892 / CBS 513.88 / FGSC A1513)).